Reading from the N-terminus, the 163-residue chain is Fatty acid-binding protein homolog (163 aa).

An N-terminal signal peptide occupies residues 1–23; that stretch reads MRCLVALILTVLIVTPEVEAKTL.

The protein belongs to the calycin superfamily. Fatty-acid binding protein (FABP) family. Abundant in the fluid surrounding the developing embryo of Ascaris suum.

Functionally, may play a role in sequestering potentially toxic fatty acids and their peroxidation products, or it may be involved in the maintenance of the impermeable lipid layer of the eggshell. The polypeptide is Fatty acid-binding protein homolog (Ascaris suum (Pig roundworm)).